The following is a 514-amino-acid chain: Alpha-1B adrenergic receptor (514 aa).

Over 1-45 the chain is Extracellular; the sequence is MNPDLDTGHNTSAPAHWGELKDANFTGPNQTSSNSTLPQLDVTRA. N-linked (GlcNAc...) asparagine glycosylation is found at Asn10, Asn24, Asn29, and Asn34. A helical transmembrane segment spans residues 46–69; sequence ISVGCLGAFILFAIVGNILVILSV. Residues 70–82 lie on the Cytoplasmic side of the membrane; it reads ACNRHLRTPTNYF. Residues 83–104 traverse the membrane as a helical segment; sequence IVNLAIADLLLSFTDLPFSATL. Topologically, residues 105–114 are extracellular; sequence EVLGYWVLGR. The helical transmembrane segment at 115–140 threads the bilayer; sequence IFCDIWAAVDVLCCTASILSLCAISI. Cysteines 117 and 194 form a disulfide. Topologically, residues 141–160 are cytoplasmic; that stretch reads DRYIGVRYSLQYPTLVTRRK. Residues 161 to 183 form a helical membrane-spanning segment; sequence AILALLSVWVLSTVISIGPLLGW. The Extracellular segment spans residues 184-200; sequence KEPAPNDDKECGVTEEP. A helical transmembrane segment spans residues 201–223; that stretch reads FYALFSSLGSFYIPLAVILVMYC. Residues 224-294 lie on the Cytoplasmic side of the membrane; that stretch reads RVYIVAKRTT…FSREKKAAKT (71 aa). Phosphothreonine is present on Thr263. The chain crosses the membrane as a helical span at residues 295 to 318; that stretch reads LGIVVGMFILCWLPFFIALPLGSL. Residues 319–325 lie on the Extracellular side of the membrane; the sequence is FSTLKPP. The helical transmembrane segment at 326–350 threads the bilayer; that stretch reads DAVFKVVFWLGYFNSCLNPIIYPCS. The Cytoplasmic portion of the chain corresponds to 351–514; it reads SKEFKRAFMR…SNMPLAPGHF (164 aa). Cys364 carries S-palmitoyl cysteine lipidation. A Nuclear localization signal motif is present at residues 367-377; it reads RGGRRRRRRRR. Disordered stretches follow at residues 391–429 and 473–514; these read GGSLERSQSRKDSLDDSGSCMSGSQRTLPSASPSPGYLG and LGEP…PGHF. Polar residues predominate over residues 409 to 423; the sequence is SCMSGSQRTLPSASP.

It belongs to the G-protein coupled receptor 1 family. Adrenergic receptor subfamily. ADRA1B sub-subfamily. As to quaternary structure, homo- and heterooligomer. Heterooligomerizes with ADRA1B homooligomers in cardiac myocytes. Interacts with CAVIN4.

It is found in the nucleus membrane. It localises to the cell membrane. Its subcellular location is the cytoplasm. The protein resides in the membrane. The protein localises to the caveola. Its function is as follows. This alpha-adrenergic receptor mediates its action by association with G proteins that activate a phosphatidylinositol-calcium second messenger system. Its effect is mediated by G(q) and G(11) proteins. Nuclear ADRA1A-ADRA1B heterooligomers regulate phenylephrine (PE)-stimulated ERK signaling in cardiac myocytes. In Mus musculus (Mouse), this protein is Alpha-1B adrenergic receptor (Adra1b).